A 245-amino-acid chain; its full sequence is DNA polymerase sliding clamp 1 (245 aa).

It belongs to the PCNA family. The subunits circularize to form a toroid; DNA passes through its center. Replication factor C (RFC) is required to load the toroid on the DNA. Forms a dimeric complex with PCNA3 and a trimeric complex with PCNA2 and PCNA3; does not form homotrimers.

Its function is as follows. Sliding clamp subunit that acts as a moving platform for DNA processing. Responsible for tethering the catalytic subunit of DNA polymerase and other proteins to DNA during high-speed replication. The trimeric complex inhibits DNA ligase and both 3'-5' and 5'-3' activity of Hel308 (Hjm) helicase, but stimulates Hjc, the Holliday junction cleavage enzyme. The sequence is that of DNA polymerase sliding clamp 1 from Sulfurisphaera tokodaii (strain DSM 16993 / JCM 10545 / NBRC 100140 / 7) (Sulfolobus tokodaii).